The chain runs to 305 residues: NAD kinase (305 aa).

The Proton acceptor role is filled by aspartate 82. NAD(+)-binding positions include 82–83, 156–157, arginine 184, aspartate 186, 197–202, alanine 221, and glutamine 255; these read DG, ND, and TAYALS.

This sequence belongs to the NAD kinase family. It depends on a divalent metal cation as a cofactor.

The protein resides in the cytoplasm. It catalyses the reaction NAD(+) + ATP = ADP + NADP(+) + H(+). Involved in the regulation of the intracellular balance of NAD and NADP, and is a key enzyme in the biosynthesis of NADP. Catalyzes specifically the phosphorylation on 2'-hydroxyl of the adenosine moiety of NAD to yield NADP. This is NAD kinase from Cupriavidus pinatubonensis (strain JMP 134 / LMG 1197) (Cupriavidus necator (strain JMP 134)).